The chain runs to 524 residues: uncharacterized protein (524 aa).

A compositionally biased stretch (polar residues) spans 83 to 101 (NSTPSKQAKPLQRNSPYQG). Disordered stretches follow at residues 83–108 (NSTPSKQAKPLQRNSPYQGNSQSENQ) and 155–179 (PPCNIETNEDDSGNNEYNNNKKRPR).

The protein resides in the cytoplasm. This is an uncharacterized protein from Saccharomyces cerevisiae (strain ATCC 204508 / S288c) (Baker's yeast).